Consider the following 986-residue polypeptide: Ephrin type-A receptor 4-A (986 aa).

Residues 1–20 form the signal peptide; the sequence is MAGIVHGILFCGLFGLCWAV. At 21–547 the chain is on the extracellular side; it reads TGSRIYPASE…MIGEGASPTV (527 aa). Residues 30 to 209 enclose the Eph LBD domain; it reads EVTLLDSRSV…FYKKCPLTVR (180 aa). Fibronectin type-III domains are found at residues 328-438 and 439-536; these read PPSA…TNQA and APST…TVPS. N-linked (GlcNAc...) asparagine glycans are attached at residues Asn340 and Asn407. A helical membrane pass occupies residues 548-569; that stretch reads LLVSVAGSIVLVVILIAAFVIS. Topologically, residues 570–986 are cytoplasmic; that stretch reads RRRSKYSKAK…QQIQGRMVPV (417 aa). A phosphotyrosine; by autocatalysis mark is found at Tyr595 and Tyr601. The region spanning 620–881 is the Protein kinase domain; it reads IKIEKVIGVG…QIVSMLDKLI (262 aa). Residues 626-634 and Lys652 contribute to the ATP site; that span reads IGVGEFGEV. Asp745 serves as the catalytic Proton acceptor. Phosphotyrosine; by autocatalysis is present on residues Tyr778 and Tyr928. The SAM domain maps to 911-975; that stretch reads SQVASVLDWL…LSSVQGMRTQ (65 aa). The PDZ-binding signature appears at 984–986; it reads VPV.

It belongs to the protein kinase superfamily. Tyr protein kinase family. Ephrin receptor subfamily.

The protein resides in the cell membrane. Its subcellular location is the early endosome. It carries out the reaction L-tyrosyl-[protein] + ATP = O-phospho-L-tyrosyl-[protein] + ADP + H(+). In terms of biological role, receptor tyrosine kinase which binds membrane-bound ephrin family ligands residing on adjacent cells, leading to contact-dependent bidirectional signaling into neighboring cells. The signaling pathway downstream of the receptor is referred to as forward signaling while the signaling pathway downstream of the ephrin ligand is referred to as reverse signaling. Highly promiscuous, it has the unique property among Eph receptors to bind and to be physiologically activated by both GPI-anchored ephrin-A and transmembrane ephrin-B ligands including EFNA1 and EFNB3. Upon activation by ephrin ligands, modulates cell morphology and integrin-dependent cell adhesion through regulation of the Rac, Rap and Rho GTPases activity. Plays an important role in the development of the nervous system controlling different steps of axonal guidance including the establishment of the corticospinal projections. The sequence is that of Ephrin type-A receptor 4-A (epha4-a) from Xenopus laevis (African clawed frog).